We begin with the raw amino-acid sequence, 246 residues long: tRNA (guanine-N(7)-)-methyltransferase (246 aa).

The S-adenosyl-L-methionine site is built by E77, E102, D129, and D152. Residue D152 is part of the active site. Residues K156, D188, and 225-228 contribute to the substrate site; that span reads TKFE.

It belongs to the class I-like SAM-binding methyltransferase superfamily. TrmB family.

The catalysed reaction is guanosine(46) in tRNA + S-adenosyl-L-methionine = N(7)-methylguanosine(46) in tRNA + S-adenosyl-L-homocysteine. The protein operates within tRNA modification; N(7)-methylguanine-tRNA biosynthesis. Catalyzes the formation of N(7)-methylguanine at position 46 (m7G46) in tRNA. The chain is tRNA (guanine-N(7)-)-methyltransferase from Haemophilus influenzae (strain 86-028NP).